A 352-amino-acid polypeptide reads, in one-letter code: N-acetyl-gamma-glutamyl-phosphate reductase (352 aa).

Cys-151 is an active-site residue.

This sequence belongs to the NAGSA dehydrogenase family. Type 1 subfamily.

Its subcellular location is the cytoplasm. The catalysed reaction is N-acetyl-L-glutamate 5-semialdehyde + phosphate + NADP(+) = N-acetyl-L-glutamyl 5-phosphate + NADPH + H(+). Its pathway is amino-acid biosynthesis; L-arginine biosynthesis; N(2)-acetyl-L-ornithine from L-glutamate: step 3/4. Its function is as follows. Catalyzes the NADPH-dependent reduction of N-acetyl-5-glutamyl phosphate to yield N-acetyl-L-glutamate 5-semialdehyde. This Renibacterium salmoninarum (strain ATCC 33209 / DSM 20767 / JCM 11484 / NBRC 15589 / NCIMB 2235) protein is N-acetyl-gamma-glutamyl-phosphate reductase.